We begin with the raw amino-acid sequence, 312 residues long: Secreted RxLR effector protein 14 (312 aa).

The signal sequence occupies residues 1-20 (MHSFKLLLALIVAICTSCDA). A RxLR-dEER motif is present at residues 46-61 (RLLRAKDGKVRADEER).

Belongs to the RxLR effector family.

The protein localises to the secreted. Its subcellular location is the host nucleus. Functionally, secreted effector that completely suppresses the host cell death induced by cell death-inducing proteins. The chain is Secreted RxLR effector protein 14 from Plasmopara viticola (Downy mildew of grapevine).